Here is a 715-residue protein sequence, read N- to C-terminus: Lanosterol synthase erg7B (715 aa).

One copy of the PFTB 1 repeat lies at 111 to 153; sequence AIEIKNYLMARANPVDGGWGLHSEGDSSVFGTSLNYTVLRLLG. Residue Asp-445 is the Proton donor of the active site. 2 PFTB repeats span residues 550 to 590 and 599 to 640; these read IQRG…RSAG and VRRG…VVQT.

This sequence belongs to the terpene cyclase/mutase family.

It is found in the lipid droplet. Its subcellular location is the endoplasmic reticulum membrane. The enzyme catalyses (S)-2,3-epoxysqualene = lanosterol. The protein operates within steroid metabolism; ergosterol biosynthesis. Its function is as follows. Lanosterol synthase; part of the third module of ergosterol biosynthesis pathway that includes the late steps of the pathway. ERG7A and ERG7B catalyze the cyclization of (S)-2,3 oxidosqualene to lanosterol, a reaction that forms the sterol core. The third module or late pathway involves the ergosterol synthesis itself through consecutive reactions that mainly occur in the endoplasmic reticulum (ER) membrane. Firstly, the squalene synthase erg9 catalyzes the condensation of 2 farnesyl pyrophosphate moieties to form squalene, which is the precursor of all steroids. Squalene synthase is crucial for balancing the incorporation of farnesyl diphosphate (FPP) into sterol and nonsterol isoprene synthesis. Secondly, squalene is converted into lanosterol by the consecutive action of the squalene epoxidase erg1 and the lanosterol synthase erg7. Then, the delta(24)-sterol C-methyltransferase erg6 methylates lanosterol at C-24 to produce eburicol. Eburicol is the substrate of the sterol 14-alpha demethylase encoded by cyp51A and cyp51B, to yield 4,4,24-trimethyl ergosta-8,14,24(28)-trienol. The C-14 reductase erg24 then reduces the C14=C15 double bond which leads to 4,4-dimethylfecosterol. A sequence of further demethylations at C-4, involving the C-4 demethylation complex containing the C-4 methylsterol oxidases erg25A or erg25B, the sterol-4-alpha-carboxylate 3-dehydrogenase erg26 and the 3-keto-steroid reductase erg27, leads to the production of fecosterol via 4-methylfecosterol. The C-8 sterol isomerase erg2 then catalyzes the reaction which results in unsaturation at C-7 in the B ring of sterols and thus converts fecosterol to episterol. The sterol-C5-desaturase erg3B then catalyzes the introduction of a C-5 double bond in the B ring to produce 5-dehydroepisterol. The 2 other sterol-C5-desaturases, erg3A and erg3C, seem to be less important in ergosterol biosynthesis. The C-22 sterol desaturase erg5 further converts 5-dehydroepisterol into ergosta-5,7,22,24(28)-tetraen-3beta-ol by forming the C-22(23) double bond in the sterol side chain. Finally, ergosta-5,7,22,24(28)-tetraen-3beta-ol is substrate of the C-24(28) sterol reductases erg4A and erg4B to produce ergosterol. Possible alternative sterol biosynthetic pathways might exist from fecosterol to ergosterol, depending on the activities of the erg3 isoforms. The chain is Lanosterol synthase erg7B from Aspergillus fumigatus (strain ATCC MYA-4609 / CBS 101355 / FGSC A1100 / Af293) (Neosartorya fumigata).